Reading from the N-terminus, the 599-residue chain is Nucleosomal histone kinase 1 (599 aa).

A Protein kinase domain is found at 47-328 (WRIGPSIGVG…PDYDKCRSWF (282 aa)). Residues 53-61 (IGVGGFGEI) and Lys-77 each bind ATP. Residue Asp-183 is the Proton acceptor of the active site. Disordered stretches follow at residues 340–507 (NGDL…PQPR) and 532–599 (RKKK…KYQG). Polar residues predominate over residues 349–361 (PQTSSNNNLSPPG). Ser-376, Ser-381, Ser-382, Ser-388, and Ser-390 each carry phosphoserine. Basic and acidic residues predominate over residues 435 to 448 (VKTEPKSTPRERAT). Ser-483 carries the post-translational modification Phosphoserine. Positions 546–558 (SRTPSSRSALASS) are enriched in low complexity. Phosphoserine is present on residues Ser-564 and Ser-586. The residue at position 589 (Thr-589) is a Phosphothreonine.

It belongs to the protein kinase superfamily. CK1 Ser/Thr protein kinase family. VRK subfamily. May interact with Unc-89 (via protein kinase domain 1). Interacts with L(2)gl. The cofactor is Mg(2+). Phosphorylated during mitosis and female meiosis. As to expression, expressed in ovaries (at protein level). Expressed in indirect flight muscle (IFM) (at protein level).

Its subcellular location is the cytoplasm. The protein resides in the nucleus. It is found in the chromosome. It localises to the myofibril. The protein localises to the sarcomere. Its subcellular location is the z line. The protein resides in the m line. It carries out the reaction L-seryl-[protein] + ATP = O-phospho-L-seryl-[protein] + ADP + H(+). It catalyses the reaction L-threonyl-[protein] + ATP = O-phospho-L-threonyl-[protein] + ADP + H(+). In terms of biological role, serine/threonine-protein kinase involved in somatic mitosis and female meiosis. Required for spindle organization in mitosis, and for the establishment or maintenance of meiosis-specific chromosomal configurations, including the prophase I karyosome and the metaphase I spindle. Specifically phosphorylates nucleosomal H2A on 'Thr-119'. Required for the development and organization of indirect flight muscle sarcomeres by regulating the formation of M line and H zone and the correct assembly of thick and thin filaments in the sarcomere. The chain is Nucleosomal histone kinase 1 (ball) from Drosophila melanogaster (Fruit fly).